The chain runs to 193 residues: MLGSRAVMLMLLLLLLPWTSQGRAVPEGSSPAWAQGQQLSQQLCTLAWTAHLPMGHVDLPREEGDDETTSEVPHIQCGDGCDPQGLRDNSQSCLQRIHQGLVFYEKLLGSDIFTGEPSLHPDGSVGQLHASLLGLRQLLQPEGHHWETEQTPSPSPSQPWQRLLLRLKILRSLQAFVAVAARVFAHGAATLSQ.

The N-terminal stretch at 1-22 (MLGSRAVMLMLLLLLLPWTSQG) is a signal peptide.

This sequence belongs to the IL-6 superfamily. As to quaternary structure, heterodimer with IL12B; disulfide-linked. The heterodimer is known as interleukin IL-23. Interacts with IL23R; this interaction enables recruitment of IL12RB1.

It is found in the secreted. Its function is as follows. Associates with IL12B to form the pro-inflammatory cytokine IL-23 that plays different roles in innate and adaptive immunity. Released by antigen-presenting cells such as dendritic cells or macrophages, binds to a heterodimeric receptor complex composed of IL12RB1 and IL23R to activate JAK2 and TYK2 which then phosphorylate the receptor to form a docking site leading to the phosphorylation of STAT3 and STAT4. This process leads to activation of several pathways including p38 MAPK or NF-kappa-B and promotes the production of pro-inflammatory cytokines such as interleukin-17A/IL17A. In turn, participates in the early and effective intracellular bacterial clearance. Promotes the expansion and survival of T-helper 17 cells, a CD4-positive helper T-cell subset that produces IL-17, as well as other IL-17-producing cells. The sequence is that of Interleukin-23 subunit alpha (IL23A) from Sus scrofa (Pig).